The chain runs to 707 residues: Glucose starvation modulator protein 1 (707 aa).

The zn(2)-C6 fungal-type DNA-binding region spans 20 to 48 (CTFCHQKHLQCSNERPCKNCVKRNIADQC). Disordered stretches follow at residues 63–122 (NSKA…PNDL), 154–188 (QPTH…PPES), 260–283 (DQQQ…GPSH), and 385–404 (NVSS…SAIA). 2 stretches are compositionally biased toward low complexity: residues 66-79 (AVAA…TTTT) and 91-104 (SPSI…ISPI). Polar residues-rich tracts occupy residues 105-114 (NTSTFDTNGH) and 154-172 (QPTH…QVQP). A compositionally biased stretch (low complexity) spans 178 to 188 (SSVPPSAPPES). The span at 260–274 (DQQQSSSEATGTSAS) shows a compositional bias: polar residues. Residues 522–591 (DYEKLSQLNS…FQLFKSVAVG (70 aa)) form the PAS domain. The span at 621–652 (NYNNNYNHNYSHNNNNNNNSNNSNNNGMSTGA) shows a compositional bias: low complexity. The segment at 621-659 (NYNNNYNHNYSHNNNNNNNSNNSNNNGMSTGAGNSGDGD) is disordered.

Belongs to the ERT1/acuK family.

It localises to the nucleus. In terms of biological role, transcription factor which regulates nonfermentable carbon utilization. In Lodderomyces elongisporus (strain ATCC 11503 / CBS 2605 / JCM 1781 / NBRC 1676 / NRRL YB-4239) (Yeast), this protein is Glucose starvation modulator protein 1 (GSM1).